The sequence spans 293 residues: Pyridoxal 5'-phosphate synthase subunit PdxS (293 aa).

A D-ribose 5-phosphate-binding site is contributed by Asp23. Catalysis depends on Lys80, which acts as the Schiff-base intermediate with D-ribose 5-phosphate. Residue Gly152 participates in D-ribose 5-phosphate binding. Position 164 (Arg164) interacts with D-glyceraldehyde 3-phosphate. D-ribose 5-phosphate contacts are provided by residues Gly213 and 234-235 (GS).

It belongs to the PdxS/SNZ family. In the presence of PdxT, forms a dodecamer of heterodimers.

It catalyses the reaction aldehydo-D-ribose 5-phosphate + D-glyceraldehyde 3-phosphate + L-glutamine = pyridoxal 5'-phosphate + L-glutamate + phosphate + 3 H2O + H(+). Its pathway is cofactor biosynthesis; pyridoxal 5'-phosphate biosynthesis. Its function is as follows. Catalyzes the formation of pyridoxal 5'-phosphate from ribose 5-phosphate (RBP), glyceraldehyde 3-phosphate (G3P) and ammonia. The ammonia is provided by the PdxT subunit. Can also use ribulose 5-phosphate and dihydroxyacetone phosphate as substrates, resulting from enzyme-catalyzed isomerization of RBP and G3P, respectively. The polypeptide is Pyridoxal 5'-phosphate synthase subunit PdxS (Dehalococcoides mccartyi (strain ATCC BAA-2100 / JCM 16839 / KCTC 5957 / BAV1)).